A 175-amino-acid chain; its full sequence is Hypoxanthine-guanine phosphoribosyltransferase (175 aa).

The diphosphate site is built by Lys40 and Gly41. Positions 96 and 97 each coordinate Mg(2+). The active-site Proton acceptor is Asp100. Residues Lys128, 149 to 150, and Asp156 each bind GMP; that span reads FL. Diphosphate is bound at residue Arg162.

This sequence belongs to the purine/pyrimidine phosphoribosyltransferase family. Mg(2+) serves as cofactor.

The protein localises to the cytoplasm. The catalysed reaction is IMP + diphosphate = hypoxanthine + 5-phospho-alpha-D-ribose 1-diphosphate. It carries out the reaction GMP + diphosphate = guanine + 5-phospho-alpha-D-ribose 1-diphosphate. It functions in the pathway purine metabolism; IMP biosynthesis via salvage pathway; IMP from hypoxanthine: step 1/1. The protein operates within purine metabolism; GMP biosynthesis via salvage pathway; GMP from guanine: step 1/1. Its function is as follows. Purine salvage pathway enzyme that catalyzes the transfer of the ribosyl-5-phosphate group from 5-phospho-alpha-D-ribose 1-diphosphate (PRPP) to the N9 position of the 6-oxopurines hypoxanthine and guanine to form the corresponding ribonucleotides IMP (inosine 5'-monophosphate) and GMP (guanosine 5'-monophosphate), with the release of PPi. This chain is Hypoxanthine-guanine phosphoribosyltransferase (hpt), found in Mycoplasma genitalium (strain ATCC 33530 / DSM 19775 / NCTC 10195 / G37) (Mycoplasmoides genitalium).